Consider the following 626-residue polypeptide: DNA-directed RNA polymerase subunit beta C-terminal section (626 aa).

Residues 287-307 (NTKSKNTGKGSKPPRASKAQN) are disordered.

The protein belongs to the RNA polymerase beta chain family. In terms of assembly, in plastids the minimal PEP RNA polymerase catalytic core is composed of four subunits: alpha, beta, beta', and beta''. When a (nuclear-encoded) sigma factor is associated with the core the holoenzyme is formed, which can initiate transcription.

It localises to the plastid. The protein resides in the chloroplast. It catalyses the reaction RNA(n) + a ribonucleoside 5'-triphosphate = RNA(n+1) + diphosphate. DNA-dependent RNA polymerase catalyzes the transcription of DNA into RNA using the four ribonucleoside triphosphates as substrates. The chain is DNA-directed RNA polymerase subunit beta C-terminal section (rpoB2) from Chlamydomonas reinhardtii (Chlamydomonas smithii).